A 63-amino-acid polypeptide reads, in one-letter code: Large ribosomal subunit protein bL35 (63 aa).

Composition is skewed to basic residues over residues 1-25 and 32-47; these read MPKM…KHRQ and LTKK…RPKK. The segment at 1 to 55 is disordered; the sequence is MPKMKSKSSAAKRFKKTANGFKHRQSFTSHILTKKSTKRKRHLRPKKQVNPSDVP.

This sequence belongs to the bacterial ribosomal protein bL35 family.

The protein is Large ribosomal subunit protein bL35 of Hahella chejuensis (strain KCTC 2396).